Here is a 512-residue protein sequence, read N- to C-terminus: Histidine ammonia-lyase (512 aa).

The 5-imidazolinone (Ala-Gly) cross-link spans 142 to 144; it reads ASG. At Ser143 the chain carries 2,3-didehydroalanine (Ser).

Belongs to the PAL/histidase family. In terms of processing, contains an active site 4-methylidene-imidazol-5-one (MIO), which is formed autocatalytically by cyclization and dehydration of residues Ala-Ser-Gly.

The protein localises to the cytoplasm. It catalyses the reaction L-histidine = trans-urocanate + NH4(+). It participates in amino-acid degradation; L-histidine degradation into L-glutamate; N-formimidoyl-L-glutamate from L-histidine: step 1/3. This Allorhizobium ampelinum (strain ATCC BAA-846 / DSM 112012 / S4) (Agrobacterium vitis (strain S4)) protein is Histidine ammonia-lyase.